The primary structure comprises 488 residues: MKKLTALFNLPELKNDIELHNMVLDSRKVKAGDLFVAIKGHQVDGNQFIDSALHSGASAVVSETELSSEHLTVAFIRNVPVVKYYQLARHLSSLADVFYDSPSKNLTLVGVTGTNGKTTISQLLAQWAELLGHRAAVMGTIGNGLLGQIVEAKNTTGSAVEIQSSLSTFKHAGADFTSIEVSSHGLAQHRVEALHFKAAIFTNLTRDHLDYHQSMENYAAAKKRLFTELDTQIKVINADDEIGYQWLTELPDAIAVSMNADFKVGSHQWMKAINIHYHFKGADITFESSWGNGVLHSPLIGAFNVSNLLLVMTTLLSFGYPLENLLATAKSLKGVCGRMEMIQYPNKPIVIVDYAHTPDALEKALIAAREHCQGELWCIFGCGGDRDRGKRPLMAQVAEQFAEKIIVTKDNPRTEPQSQIEADIVAGFKNMEKVGIIPDRAQAIQFAIESAVENDVILIAGKGHEHYQIIGSEVVHFSDQEIALDFLK.

UDP-N-acetyl-alpha-D-muramoyl-L-alanyl-D-glutamate-binding positions include Leu-24, Ser-26, and His-41 to Val-43. Gly-113–Thr-119 contacts ATP. UDP-N-acetyl-alpha-D-muramoyl-L-alanyl-D-glutamate-binding positions include Asn-154, Thr-155–Thr-156, Ser-182, Gln-188, and Arg-190. Lys-222 is modified (N6-carboxylysine). Meso-2,6-diaminopimelate is bound by residues Arg-386, Asp-410–Arg-413, Gly-461, and Glu-465. Positions Asp-410–Arg-413 match the Meso-diaminopimelate recognition motif motif.

The protein belongs to the MurCDEF family. MurE subfamily. It depends on Mg(2+) as a cofactor. Carboxylation is probably crucial for Mg(2+) binding and, consequently, for the gamma-phosphate positioning of ATP.

Its subcellular location is the cytoplasm. The enzyme catalyses UDP-N-acetyl-alpha-D-muramoyl-L-alanyl-D-glutamate + meso-2,6-diaminopimelate + ATP = UDP-N-acetyl-alpha-D-muramoyl-L-alanyl-gamma-D-glutamyl-meso-2,6-diaminopimelate + ADP + phosphate + H(+). It functions in the pathway cell wall biogenesis; peptidoglycan biosynthesis. In terms of biological role, catalyzes the addition of meso-diaminopimelic acid to the nucleotide precursor UDP-N-acetylmuramoyl-L-alanyl-D-glutamate (UMAG) in the biosynthesis of bacterial cell-wall peptidoglycan. This chain is UDP-N-acetylmuramoyl-L-alanyl-D-glutamate--2,6-diaminopimelate ligase, found in Haemophilus influenzae (strain 86-028NP).